Reading from the N-terminus, the 34-residue chain is Photosystem II reaction center protein M (34 aa).

The helical transmembrane segment at 5-25 (ILAVIATALFVLIPTAFLLIL) threads the bilayer.

It belongs to the PsbM family. As to quaternary structure, PSII is composed of 1 copy each of membrane proteins PsbA, PsbB, PsbC, PsbD, PsbE, PsbF, PsbH, PsbI, PsbJ, PsbK, PsbL, PsbM, PsbT, PsbX, PsbY, PsbZ, Psb30/Ycf12, at least 3 peripheral proteins of the oxygen-evolving complex and a large number of cofactors. It forms dimeric complexes.

The protein localises to the plastid. It is found in the chloroplast thylakoid membrane. One of the components of the core complex of photosystem II (PSII). PSII is a light-driven water:plastoquinone oxidoreductase that uses light energy to abstract electrons from H(2)O, generating O(2) and a proton gradient subsequently used for ATP formation. It consists of a core antenna complex that captures photons, and an electron transfer chain that converts photonic excitation into a charge separation. This subunit is found at the monomer-monomer interface. The chain is Photosystem II reaction center protein M from Chaetosphaeridium globosum (Charophycean green alga).